Here is a 136-residue protein sequence, read N- to C-terminus: NADPH-dependent 7-cyano-7-deazaguanine reductase (136 aa).

Cysteine 50 functions as the Thioimide intermediate in the catalytic mechanism. Catalysis depends on aspartate 57, which acts as the Proton donor. Substrate is bound by residues 72–74 and 91–92; these read YEL and HE.

This sequence belongs to the GTP cyclohydrolase I family. QueF type 1 subfamily.

It localises to the cytoplasm. The catalysed reaction is 7-aminomethyl-7-carbaguanine + 2 NADP(+) = 7-cyano-7-deazaguanine + 2 NADPH + 3 H(+). The protein operates within tRNA modification; tRNA-queuosine biosynthesis. Catalyzes the NADPH-dependent reduction of 7-cyano-7-deazaguanine (preQ0) to 7-aminomethyl-7-deazaguanine (preQ1). This Prochlorococcus marinus (strain AS9601) protein is NADPH-dependent 7-cyano-7-deazaguanine reductase.